A 374-amino-acid polypeptide reads, in one-letter code: tRNA-specific 2-thiouridylase MnmA (374 aa).

Residues 15–22 and Met-41 each bind ATP; that span reads GMSGGVDS. The interaction with target base in tRNA stretch occupies residues 101 to 103; it reads NPD. Cys-106 serves as the catalytic Nucleophile. The cysteines at positions 106 and 206 are disulfide-linked. Position 130 (Gly-130) interacts with ATP. The interval 156–158 is interaction with tRNA; it reads KDQ. Residue Cys-206 is the Cysteine persulfide intermediate of the active site. Residues 324 to 325 form an interaction with tRNA region; the sequence is RY.

Belongs to the MnmA/TRMU family.

The protein localises to the cytoplasm. It catalyses the reaction S-sulfanyl-L-cysteinyl-[protein] + uridine(34) in tRNA + AH2 + ATP = 2-thiouridine(34) in tRNA + L-cysteinyl-[protein] + A + AMP + diphosphate + H(+). In terms of biological role, catalyzes the 2-thiolation of uridine at the wobble position (U34) of tRNA, leading to the formation of s(2)U34. This Aromatoleum aromaticum (strain DSM 19018 / LMG 30748 / EbN1) (Azoarcus sp. (strain EbN1)) protein is tRNA-specific 2-thiouridylase MnmA.